Consider the following 344-residue polypeptide: Phosphoribosylformylglycinamidine cyclo-ligase (344 aa).

The protein belongs to the AIR synthase family.

Its subcellular location is the cytoplasm. The enzyme catalyses 2-formamido-N(1)-(5-O-phospho-beta-D-ribosyl)acetamidine + ATP = 5-amino-1-(5-phospho-beta-D-ribosyl)imidazole + ADP + phosphate + H(+). The protein operates within purine metabolism; IMP biosynthesis via de novo pathway; 5-amino-1-(5-phospho-D-ribosyl)imidazole from N(2)-formyl-N(1)-(5-phospho-D-ribosyl)glycinamide: step 2/2. The protein is Phosphoribosylformylglycinamidine cyclo-ligase of Haemophilus influenzae (strain PittGG).